The primary structure comprises 111 residues: X antigen family member 3 (111 aa).

The tract at residues 1–111 (MIWRGRSTYR…PEGGDRQPQV (111 aa)) is disordered. Positions 29 to 40 (PGDEEPQQEEPP) are enriched in acidic residues. Positions 97–111 (EQFKMPEGGDRQPQV) are enriched in basic and acidic residues.

This sequence belongs to the GAGE family.

The polypeptide is X antigen family member 3 (XAGE3) (Homo sapiens (Human)).